Consider the following 438-residue polypeptide: GTPase Obg (438 aa).

Positions 2-160 constitute an Obg domain; the sequence is SMFLDQVTID…RKIELELKVL (159 aa). Positions 128–147 are disordered; that stretch reads NIRFASPRNPAPEIAENGEP. Positions 161-339 constitute an OBG-type G domain; it reads ADVGLVGFPS…LLNATADLLE (179 aa). Residues 167-174, 192-196, 214-217, 284-287, and 320-322 each bind GTP; these read GFPSVGKS, FTTLV, DLPG, NKMD, and SGV. Positions 174 and 194 each coordinate Mg(2+). In terms of domain architecture, OCT spans 360-438; the sequence is GFQPEGPEFT…IGNFEFEFVE (79 aa).

It belongs to the TRAFAC class OBG-HflX-like GTPase superfamily. OBG GTPase family. In terms of assembly, monomer. Mg(2+) is required as a cofactor.

It is found in the cytoplasm. In terms of biological role, an essential GTPase which binds GTP, GDP and possibly (p)ppGpp with moderate affinity, with high nucleotide exchange rates and a fairly low GTP hydrolysis rate. Plays a role in control of the cell cycle, stress response, ribosome biogenesis and in those bacteria that undergo differentiation, in morphogenesis control. The polypeptide is GTPase Obg (Enterococcus faecalis (strain ATCC 700802 / V583)).